A 428-amino-acid polypeptide reads, in one-letter code: Flotillin-2 (428 aa).

Residue Gly2 is the site of N-myristoyl glycine attachment. Cys4 carries the S-palmitoyl cysteine; by ZDHHC5 lipid modification. A lipid anchor (S-palmitoyl cysteine) is attached at Cys19. Cys20 is lipidated: S-palmitoyl cysteine; by ZDHHC5. The residue at position 405 (Ser405) is a Phosphoserine.

This sequence belongs to the band 7/mec-2 family. Flotillin subfamily. In terms of assembly, heterooligomeric complex of flotillin-1 and flotillin-2 and caveolin-1 and caveolin-2. Interacts with ECPAS. In terms of processing, ZDHHC5-catalyzed palmitoylation predominantly occurs at Cys-4. ZDHHC5-catalyzed palmitoylation may be required for the formation of higher-order complexes and for neurite outgrowth in cultured neural stem cells. As to expression, in skin, expressed in epidermis and epidermal appendages but not in dermis. Expressed in all layers of the epidermis except the basal layer. In hair follicles, expressed in the suprabasal layer but not the basal layer. Also expressed in melanoma and carcinoma cell lines, fibroblasts and foreskin melanocytes.

Its subcellular location is the cell membrane. The protein localises to the membrane. It localises to the caveola. It is found in the endosome. Functionally, may act as a scaffolding protein within caveolar membranes, functionally participating in formation of caveolae or caveolae-like vesicles. May be involved in epidermal cell adhesion and epidermal structure and function. This is Flotillin-2 (FLOT2) from Homo sapiens (Human).